Consider the following 321-residue polypeptide: tRNA-dihydrouridine synthase B (321 aa).

Residues 16–18 and Gln-70 contribute to the FMN site; that span reads PMA. Residue Cys-100 is the Proton donor of the active site. Residues Lys-139, 200–202, and 224–225 contribute to the FMN site; these read NGD and GR.

The protein belongs to the Dus family. DusB subfamily. FMN serves as cofactor.

It catalyses the reaction a 5,6-dihydrouridine in tRNA + NAD(+) = a uridine in tRNA + NADH + H(+). The enzyme catalyses a 5,6-dihydrouridine in tRNA + NADP(+) = a uridine in tRNA + NADPH + H(+). Catalyzes the synthesis of 5,6-dihydrouridine (D), a modified base found in the D-loop of most tRNAs, via the reduction of the C5-C6 double bond in target uridines. This Klebsiella pneumoniae protein is tRNA-dihydrouridine synthase B.